Consider the following 305-residue polypeptide: Sulfate adenylyltransferase subunit 2 (305 aa).

It belongs to the PAPS reductase family. CysD subfamily. In terms of assembly, heterodimer composed of CysD, the smaller subunit, and CysN.

It catalyses the reaction sulfate + ATP + H(+) = adenosine 5'-phosphosulfate + diphosphate. The protein operates within sulfur metabolism; hydrogen sulfide biosynthesis; sulfite from sulfate: step 1/3. Functionally, with CysN forms the ATP sulfurylase (ATPS) that catalyzes the adenylation of sulfate producing adenosine 5'-phosphosulfate (APS) and diphosphate, the first enzymatic step in sulfur assimilation pathway. APS synthesis involves the formation of a high-energy phosphoric-sulfuric acid anhydride bond driven by GTP hydrolysis by CysN coupled to ATP hydrolysis by CysD. In Azotobacter vinelandii (strain DJ / ATCC BAA-1303), this protein is Sulfate adenylyltransferase subunit 2.